The sequence spans 273 residues: Glutamate racemase (273 aa).

Substrate contacts are provided by residues 7–8 (DS) and 39–40 (YG). The Proton donor/acceptor role is filled by Cys-70. 71–72 (NT) lines the substrate pocket. Cys-194 serves as the catalytic Proton donor/acceptor. 195-196 (TH) contacts substrate.

Belongs to the aspartate/glutamate racemases family.

The catalysed reaction is L-glutamate = D-glutamate. It participates in cell wall biogenesis; peptidoglycan biosynthesis. Provides the (R)-glutamate required for cell wall biosynthesis. The sequence is that of Glutamate racemase from Dinoroseobacter shibae (strain DSM 16493 / NCIMB 14021 / DFL 12).